Here is an 80-residue protein sequence, read N- to C-terminus: Kappa-actitoxin-Avd4f (80 aa).

A signal peptide spans 1 to 19 (MNKALFLCLVVLCAAVVFA). Positions 20-31 (AEDLQKAKHAPF) are excised as a propeptide. Disulfide bonds link C41-C76, C43-C69, and C59-C77.

Belongs to the sea anemone type 3 (BDS) potassium channel toxin family. Moderately expressed in the ectodermal tissue from the distal and proximal tentacles, body wall, and oral disk.

It localises to the secreted. Its subcellular location is the nematocyst. Functionally, blocks Kv3 voltage-gated potassium channels. Reduces blood pressure. The polypeptide is Kappa-actitoxin-Avd4f (Anemonia viridis (Snakelocks anemone)).